We begin with the raw amino-acid sequence, 565 residues long: Membrane protein insertase YidC (565 aa).

6 helical membrane-spanning segments follow: residues 6-26 (VLLIFSWLTVATLLWMDWSKN), 348-368 (LMALIGQGLFWILSHLNSLLH), 370-390 (WGWAIVGLVVLLRIAMYPLSA), 437-457 (GGCFPILIQMPIFFALYWVLV), 479-499 (PYFILPLLNIVIMWATQKLTP), and 516-536 (PLIFGVMMAFVPSGLALYWVI).

It belongs to the OXA1/ALB3/YidC family. Type 1 subfamily. As to quaternary structure, interacts with the Sec translocase complex via SecD. Specifically interacts with transmembrane segments of nascent integral membrane proteins during membrane integration.

The protein resides in the cell inner membrane. Functionally, required for the insertion and/or proper folding and/or complex formation of integral membrane proteins into the membrane. Involved in integration of membrane proteins that insert both dependently and independently of the Sec translocase complex, as well as at least some lipoproteins. Aids folding of multispanning membrane proteins. The protein is Membrane protein insertase YidC of Xylella fastidiosa (strain M23).